Consider the following 318-residue polypeptide: Aldehyde oxidoreductase FAD-binding subunit PaoB (318 aa).

An FAD-binding PCMH-type domain is found at 1 to 223; sequence MKAFTYERVN…VAVTLPPPLG (223 aa). FAD contacts are provided by residues 26–34 and T108; that span reads KFIAGGTNL. [4Fe-4S] cluster-binding residues include C119, C129, C138, and C157. D164, I213, and K230 together coordinate FAD.

In terms of assembly, heterotrimer composed of PaoA, PaoB and PaoC. FAD serves as cofactor. It depends on [4Fe-4S] cluster as a cofactor.

It localises to the periplasm. The enzyme catalyses an aldehyde + A + H2O = a carboxylate + AH2 + H(+). The complex requires PaoD for activity. Oxidizes aldehydes to the corresponding carboxylic acids with a preference for aromatic aldehydes. It might play a role in the detoxification of aldehydes to avoid cell damage. This is Aldehyde oxidoreductase FAD-binding subunit PaoB from Escherichia coli (strain K12).